Consider the following 186-residue polypeptide: Early nodulin-like protein 13 (186 aa).

An N-terminal signal peptide occupies residues 1-23; that stretch reads MAQRTLVATFFLIFFLLTNLVCS. The Phytocyanin domain occupies 24–128; the sequence is KEIIVGGKTS…GEKLHIVVMS (105 aa). A disulfide bridge connects residues Cys82 and Cys116. N-linked (GlcNAc...) asparagine glycosylation is found at Asn83 and Asn90. Ala165 is lipidated: GPI-anchor amidated alanine. The propeptide at 166-186 is removed in mature form; that stretch reads SSLTRQVGVLGFVGLLAIVLL.

The protein belongs to the early nodulin-like (ENODL) family. In terms of tissue distribution, mostly expressed in seedlings, siliques and flowers, and, to a lower extent, in roots, stems and seeds, but barely in leaves.

It is found in the cell membrane. Functionally, may act as a carbohydrate transporter. Required, together with ENODL11, ENODL12, ENODL13, ENODL14 and ENODL15, for male-female communication and pollen tube reception and burst at the synergid cell surface of the female gametophyte. This Arabidopsis thaliana (Mouse-ear cress) protein is Early nodulin-like protein 13.